The sequence spans 581 residues: MAGRIPRVFINDLLARTDIVDLIDARVKLKKQGKNFHACCPFHNEKTPSFTVNGEKQFYHCFGCGAHGNAIDFLMNYDKLEFVETVEELAAMHNLEVPFEAGSGPSQIERHQRQTLYQLMDGLNTFYQQSLQQPVATSARQYLEKRGLSHEVIARFAIGFAPPGWDNVLKRFGGNPENRQSLVDAGMLVTNDQGRSYDRFRERVMFPIRDKRGRVIGFGGRVLGNDTPKYLNSPETDIFHKGRQLYGLYEAQQDNAEPNRLLVVEGYMDVVALAQYGINYAVASLGTSTTADHIQLLFRATNNVICCYDGDRAGRDAAWRALETALPYMTDGRQLRFMFLPDGEDPDTLVRKEGKEAFEARMEQAMPLSAFLFNSLMPQVDLSTPDGRARLSTLALPLISQVPGETLRIYLRQELGNKLGILDDSQLERLMPKAAESGVSRPVPQLKRTTMRILIGLLVQNPELATLVPPLENLDENKLPGLGLFRELVNTCLSQPGLTTGQLLEHYRGTNNAATLEKLSMWDDIADKNIAEQTFTDSLNHMFDSLLELRQEELIARERTHGLSNEERLELWTLNQELAKK.

The CHC2-type zinc-finger motif lies at Cys40–Cys64. Positions Asn259–Pro341 constitute a Toprim domain. Residues Glu265, Asp309, and Asp311 each coordinate Mg(2+).

Belongs to the DnaG primase family. Monomer. Interacts with DnaB. Requires Zn(2+) as cofactor. The cofactor is Mg(2+).

The catalysed reaction is ssDNA + n NTP = ssDNA/pppN(pN)n-1 hybrid + (n-1) diphosphate.. Its function is as follows. RNA polymerase that catalyzes the synthesis of short RNA molecules used as primers for DNA polymerase during DNA replication. This is DNA primase from Escherichia coli O6:H1 (strain CFT073 / ATCC 700928 / UPEC).